The primary structure comprises 281 residues: MDSAYWSYDNIVPSFRLDGKLVILTGGSGGLAAVVSRALLAKGADVALVDMNLERTQQAARDVLQWGEEQMKGKYESPIGQVSAWSCNIGDAEAVDLTFKAINEHHGKISSVLVNTAGYAENFPAEEYPAKNAENLMKVNGLGSFYVSQAFARPLIQNNMTGSIILIGSMSGTIVNDPQPQCMYNMSKAGVIHLARSLACEWAKYNIRVNTLSPGYILTPLTRNVISGHTEMKTEWESKIPMKRMAEPKEFVGSILYLASESASSYTTGHNLVVDGGYECW.

L31 and N52 together coordinate NADP(+). S169 acts as the Proton donor in catalysis. NADP(+)-binding residues include Y184, K188, I217, and T219. The Proton acceptor role is filled by Y184. K188 acts as the Lowers pKa of active site Tyr in catalysis.

It belongs to the short-chain dehydrogenases/reductases (SDR) family.

It carries out the reaction D-arabinitol + NAD(+) = D-ribulose + NADH + H(+). The protein operates within carbohydrate metabolism; D-arabinitol metabolism. This is D-arabinitol 2-dehydrogenase [ribulose-forming] (ARD1) from Candida albicans (strain WO-1) (Yeast).